A 156-amino-acid chain; its full sequence is Small ribosomal subunit protein uS7 (156 aa).

It belongs to the universal ribosomal protein uS7 family. As to quaternary structure, part of the 30S ribosomal subunit. Contacts proteins S9 and S11.

Functionally, one of the primary rRNA binding proteins, it binds directly to 16S rRNA where it nucleates assembly of the head domain of the 30S subunit. Is located at the subunit interface close to the decoding center, probably blocks exit of the E-site tRNA. The protein is Small ribosomal subunit protein uS7 of Rhodospirillum centenum (strain ATCC 51521 / SW).